A 607-amino-acid polypeptide reads, in one-letter code: Elongation factor 4 (607 aa).

In terms of domain architecture, tr-type G spans 11-193; the sequence is EKIRNFSIIA…QIVEKVPAPT (183 aa). GTP contacts are provided by residues 23–28 and 140–143; these read DHGKST and NKID.

This sequence belongs to the TRAFAC class translation factor GTPase superfamily. Classic translation factor GTPase family. LepA subfamily.

It is found in the cell membrane. The catalysed reaction is GTP + H2O = GDP + phosphate + H(+). Functionally, required for accurate and efficient protein synthesis under certain stress conditions. May act as a fidelity factor of the translation reaction, by catalyzing a one-codon backward translocation of tRNAs on improperly translocated ribosomes. Back-translocation proceeds from a post-translocation (POST) complex to a pre-translocation (PRE) complex, thus giving elongation factor G a second chance to translocate the tRNAs correctly. Binds to ribosomes in a GTP-dependent manner. This is Elongation factor 4 from Streptococcus gordonii (strain Challis / ATCC 35105 / BCRC 15272 / CH1 / DL1 / V288).